Consider the following 220-residue polypeptide: Probable GTP-binding protein EngB (220 aa).

One can recognise an EngB-type G domain in the interval 26-200 (EGIEIAFAGR…RAKLDEWYAP (175 aa)). GTP is bound by residues 34-41 (GRSNTGKS), 61-65 (GRTQL), 79-82 (DLPG), 146-149 (TKAD), and 179-181 (FSS). 2 residues coordinate Mg(2+): Ser41 and Thr63.

It belongs to the TRAFAC class TrmE-Era-EngA-EngB-Septin-like GTPase superfamily. EngB GTPase family. Mg(2+) serves as cofactor.

Functionally, necessary for normal cell division and for the maintenance of normal septation. In Vibrio cholerae serotype O1 (strain ATCC 39541 / Classical Ogawa 395 / O395), this protein is Probable GTP-binding protein EngB.